The sequence spans 145 residues: Neutral phospholipase A2 paradoxin-like beta chain (145 aa).

A signal peptide spans 1 to 27 (MHPAHLLVLLAVCVSLLGASDIPPLPL). Cystine bridges form between Cys-38/Cys-98, Cys-54/Cys-144, Cys-56/Cys-72, Cys-71/Cys-125, Cys-78/Cys-118, Cys-87/Cys-111, and Cys-105/Cys-116.

It belongs to the phospholipase A2 family. Group I subfamily. N49 sub-subfamily. As to quaternary structure, heterotrimer of alpha, beta, and gamma chains; non-covalently linked. As to expression, expressed by the venom gland.

The protein resides in the secreted. Its function is as follows. Heterotrimer: Snake venom phospholipase A2 (PLA2) heterotrimer that acts as a potent presynaptic neurotoxin by blocking synaptic transmission and synaptic vesicle recycling. May act by binding in a calcium-dependent fashion to neurotonal pentraxin-1 (NPTX1) and neurotonal pentraxin-2 (NPTX2), but not to neuronal pentraxin receptor (NPTXR). Also binds to taipoxin-associated calcium binding protein 49 (RCN2), a protein localized in the lumen of endoplasmic reticulum. Functionally, monomer (beta chain): Snake venom phospholipase A2 homolog that is neither toxic nor enzymatically active. Does not bind calcium. In Oxyuranus microlepidotus (Inland taipan), this protein is Neutral phospholipase A2 paradoxin-like beta chain.